Here is a 351-residue protein sequence, read N- to C-terminus: MHSPSSTSFTWILITLGCLAFYASLSDAQLTPTFYDTSCPNVSNIVRDIIINELRSDPRITASILRLHFHDCFVNGCDASILLDNTTSFLTEKDALGNANSARGFPTVDRIKAAVERACPRTVSCADVLTIAAQQSVNLAGGPSWRVPLGRRDSLQAFLDLANANLPAPFFTLPQLKDAFAKVGLDRPSDLVALSGGHTFGKNQCRFIMDRLYNFSNTGLPDPTLNTTYLQTLRQQCPLNGNQSVLVDFDLRTPTVFDNKYYVNLKEQKGLIQSDQELFSSPNATDTIPLVRSFADGTQKFFNAFVEAMNRMGNITPLTGTQGEIRLNCRVVNSNSLLHDIVEVVDFVSSM.

The first 28 residues, 1-28 (MHSPSSTSFTWILITLGCLAFYASLSDA), serve as a signal peptide directing secretion. Intrachain disulfides connect Cys39–Cys119, Cys72–Cys77, Cys125–Cys329, and Cys205–Cys237. Asn41 is a glycosylation site (N-linked (GlcNAc...) asparagine). Residue His70 is the Proton acceptor of the active site. Ca(2+) is bound by residues Asp71, Val74, Gly76, Asp78, and Ser80. N-linked (GlcNAc...) asparagine glycosylation occurs at Asn85. Pro167 serves as a coordination point for substrate. A heme b-binding site is contributed by His198. Residue Thr199 participates in Ca(2+) binding. Residues Asn214, Asn226, and Asn242 are each glycosylated (N-linked (GlcNAc...) asparagine). Ca(2+) is bound by residues Asp250, Thr253, and Asp258. Asn283 is a glycosylation site (N-linked (GlcNAc...) asparagine).

The protein belongs to the peroxidase family. Classical plant (class III) peroxidase subfamily. Ca(2+) serves as cofactor. It depends on heme b as a cofactor.

It localises to the secreted. The protein localises to the vacuole. The enzyme catalyses 2 a phenolic donor + H2O2 = 2 a phenolic radical donor + 2 H2O. Its function is as follows. Removal of H(2)O(2), oxidation of toxic reductants, biosynthesis and degradation of lignin, suberization, auxin catabolism, response to environmental stresses such as wounding, pathogen attack and oxidative stress. These functions might be dependent on each isozyme/isoform in each plant tissue. In Armoracia rusticana (Horseradish), this protein is Peroxidase C1B (PRXC1B).